Reading from the N-terminus, the 93-residue chain is Large ribosomal subunit protein uL23cz/uL23cy (93 aa).

It belongs to the universal ribosomal protein uL23 family. As to quaternary structure, part of the 50S ribosomal subunit.

It is found in the plastid. The protein resides in the chloroplast. Binds to 23S rRNA. The sequence is that of Large ribosomal subunit protein uL23cz/uL23cy (rpl23-A) from Helianthus annuus (Common sunflower).